A 315-amino-acid chain; its full sequence is Taste receptor type 2 member 3 (315 aa).

Over 1–5 (MGLTD) the chain is Extracellular. The helical transmembrane segment at 6–26 (GVFLIVCGAQFTLGILXNGFI) threads the bilayer. Residues 27–41 (GLVNGRSWFKTKRMS) lie on the Cytoplasmic side of the membrane. A helical transmembrane segment spans residues 42–62 (LSDFIIATLALSRIILLCIIL). At 63-93 (TDSFLIVFSVKEHDSGIIMQLIDVFWTFTNH) the chain is on the extracellular side. The helical transmembrane segment at 94–114 (LSIWFATCLGVLYCLKIASFS) threads the bilayer. The Cytoplasmic segment spans residues 115–127 (HPTFLWLKWRVSR). A helical membrane pass occupies residues 128-148 (VMVWMLLGALLLSCGSTASLI). The Extracellular portion of the chain corresponds to 149 to 185 (NEFKLYSVLRGIEATRNVTEHFRKKRNEYYLIHVLGT). N-linked (GlcNAc...) asparagine glycosylation is present at Asn-165. Residues 186–206 (LWYLPPLVVSLASYFLLIFSL) form a helical membrane-spanning segment. Residues 207 to 233 (GRHTRQMLQNSTSSRDPSTEAHKRAIR) lie on the Cytoplasmic side of the membrane. A helical transmembrane segment spans residues 234–254 (IILSFFFLFLLYFLAFLIASF). Residues 255-265 (GNFLPETKMAK) lie on the Extracellular side of the membrane. Residues 266 to 286 (MIGEVMTMFYPAGHSFIVILG) traverse the membrane as a helical segment. Residues 287-315 (NSKLKQTFVEMLRCESGHLKPGSKGPIFS) lie on the Cytoplasmic side of the membrane.

This sequence belongs to the G-protein coupled receptor T2R family.

The protein resides in the membrane. Its function is as follows. Gustducin-coupled receptor implicated in the perception of bitter compounds in the oral cavity and the gastrointestinal tract. Signals through PLCB2 and the calcium-regulated cation channel TRPM5. The protein is Taste receptor type 2 member 3 (TAS2R3) of Papio hamadryas (Hamadryas baboon).